The following is a 426-amino-acid chain: Target of rapamycin complex 2 subunit AVO2 (426 aa).

ANK repeat units follow at residues 4-33 (EPSV…DLLT), 39-68 (NGWS…DKHE), 74-104 (KGNT…FINH), 108-137 (NGRA…DLWV), and 141-171 (NGDT…SLDD). Residues 259 to 302 (STHTTSGNGGNRRSSITNPVFNPRKPTLSTDSFSSSSNSSSRLR) form a disordered region. The segment covering 260 to 278 (THTTSGNGGNRRSSITNPV) has biased composition (polar residues). The span at 285-302 (TLSTDSFSSSSNSSSRLR) shows a compositional bias: low complexity. Phosphoserine occurs at positions 315 and 350. Over residues 350-359 (SNDNVRGDSQ) the composition is skewed to polar residues. The segment at 350–392 (SNDNVRGDSQTATINDDGGGGNGGDATIGMGLRKDPDDENENK) is disordered. Residues 366-375 (DGGGGNGGDA) are compositionally biased toward gly residues. Positions 381-392 (LRKDPDDENENK) are enriched in basic and acidic residues.

In terms of assembly, the target of rapamycin complex 2 (TORC2) is composed of at least AVO1, AVO2, BIT61, LST8, TOR2 and TSC11. TORC2 forms a homodimer. Contrary to TORC1, TORC2 does not bind to and is not sensitive to FKBP-rapamycin. AVO2 is peripherally associated to AVO1 and TSC11.

Its subcellular location is the cell membrane. It localises to the vacuole membrane. In terms of biological role, component of TORC2, which regulates cell cycle-dependent polarization of the actin-cytoskeleton and cell wall integrity. TORC2 controls polarity of the actin cytoskeleton, which is required for orienting the secretory pathway toward discrete growth sites, via the RHO1/PKC1/MAPK cell integrity pathway. In Saccharomyces cerevisiae (strain ATCC 204508 / S288c) (Baker's yeast), this protein is Target of rapamycin complex 2 subunit AVO2 (AVO2).